Reading from the N-terminus, the 396-residue chain is Elongation factor Tu (396 aa).

The region spanning 10–206 (KLHVNVGTIG…ALDTHIPNPE (197 aa)) is the tr-type G domain. Residues 19-26 (GHVDHGKT) form a G1 region. 19–26 (GHVDHGKT) serves as a coordination point for GTP. Residue T26 participates in Mg(2+) binding. The interval 60–64 (GITIS) is G2. The segment at 81–84 (DCPG) is G3. GTP-binding positions include 81–85 (DCPGH) and 136–139 (NKAD). The segment at 136-139 (NKAD) is G4. The tract at residues 174–176 (SAL) is G5.

The protein belongs to the TRAFAC class translation factor GTPase superfamily. Classic translation factor GTPase family. EF-Tu/EF-1A subfamily. As to quaternary structure, monomer.

The protein resides in the cytoplasm. It carries out the reaction GTP + H2O = GDP + phosphate + H(+). Functionally, GTP hydrolase that promotes the GTP-dependent binding of aminoacyl-tRNA to the A-site of ribosomes during protein biosynthesis. The chain is Elongation factor Tu from Xylella fastidiosa (strain 9a5c).